We begin with the raw amino-acid sequence, 262 residues long: Ribonuclease 3 (262 aa).

The region spanning 18-141 is the RNase III domain; the sequence is LATFLKNLDI…LVGAIYEDMG (124 aa). Residue E59 participates in Mg(2+) binding. The active site involves D63. 2 residues coordinate Mg(2+): D127 and E130. Residue E130 is part of the active site.

Belongs to the ribonuclease III family. Homodimer. It depends on Mg(2+) as a cofactor.

The protein localises to the cytoplasm. The catalysed reaction is Endonucleolytic cleavage to 5'-phosphomonoester.. Digests double-stranded RNA. Involved in the processing of primary rRNA transcript to yield the immediate precursors to the large and small rRNAs (23S and 16S). Processes some mRNAs, and tRNAs when they are encoded in the rRNA operon. Processes pre-crRNA and tracrRNA of type II CRISPR loci if present in the organism. The sequence is that of Ribonuclease 3 from Mycoplasma genitalium (strain ATCC 33530 / DSM 19775 / NCTC 10195 / G37) (Mycoplasmoides genitalium).